A 520-amino-acid chain; its full sequence is 4-hydroxyphenylacetate 3-monooxygenase oxygenase component (520 aa).

Residues 155–157 (HAI) and T196 each bind FAD.

This sequence belongs to the FADH(2)-utilizing monooxygenase family. Homodimer. HPA 3-hydroxylase consists of a reductase component HpaC and an oxygenase component HpaB. Some form of interactions between the reductase and the oxygenase facilitate the transfer of FADH(-) to the oxygenase in P.aeruginosa, although interactions are not required in other species.

The catalysed reaction is 4-hydroxyphenylacetate + FADH2 + O2 = 3,4-dihydroxyphenylacetate + FAD + H2O + H(+). It participates in aromatic compound metabolism; 4-hydroxyphenylacetate degradation; pyruvate and succinate semialdehyde from 4-hydroxyphenylacetate: step 1/7. Oxygenase component of the 4-hydroxyphenylacetate (HPA) 3-hydroxylase. Catalyzes the hydroxylation of 4-hydroxyphenylacetate to form 3,4-dihydroxyphenylacetate, using FADH(-) provided by the reductase component HpaC to activate oxygen. To a lesser extent, can also use reduced FMN. In vitro, has hydroxylation activity toward tyrosol and various cinnamic acid derivatives, catalyzing the hydroxylation of p-coumaric acid, caffeic acid, ferulic acid, and coniferaldehyde. The protein is 4-hydroxyphenylacetate 3-monooxygenase oxygenase component of Pseudomonas aeruginosa (strain ATCC 15692 / DSM 22644 / CIP 104116 / JCM 14847 / LMG 12228 / 1C / PRS 101 / PAO1).